The chain runs to 307 residues: Glutaminase 1 (307 aa).

7 residues coordinate substrate: Ser62, Asn114, Glu159, Asn166, Tyr190, Tyr242, and Val260.

It belongs to the glutaminase family. Homotetramer.

It catalyses the reaction L-glutamine + H2O = L-glutamate + NH4(+). This Clostridium perfringens (strain 13 / Type A) protein is Glutaminase 1.